Consider the following 332-residue polypeptide: MGVPPLHPEISAAYSVLETGEPIGREAALMLAALPGEHALDIASLANKVRNRWGKGGVHACSIMNAKSGVCGENCRFCAQSRHNHSDIEVYPLVDEDAVLFEARGCVEQGVSHFGIVTSGYGYLKMSDEFQRILSMIDRLHSELPSLQVCASLGVLGPDTAKALAGRGIAHYNINIQVTPGRYGELIADTHAVEERMETVRLLRRNGVSVCCGGIIGVGEHMEDRVEMMFALRELDVSVIPINVLVPIKGTPLEGAPSLPLDEIVKTFAIMRLVHPRKTIKFAAGRETVMKDFQGLLMLSGADGLLTGGYLTTRGREVADDTRFRAQLASFS.

One can recognise a Radical SAM core domain in the interval 53 to 283 (WGKGGVHACS…VHPRKTIKFA (231 aa)). Residues Cys71, Cys75, and Cys78 each contribute to the [4Fe-4S] cluster site. The [2Fe-2S] cluster site is built by Cys150, Cys211, and Lys281.

Belongs to the radical SAM superfamily. Biotin synthase family. Homodimer. Requires [4Fe-4S] cluster as cofactor. [2Fe-2S] cluster serves as cofactor.

It catalyses the reaction (4R,5S)-dethiobiotin + (sulfur carrier)-SH + 2 reduced [2Fe-2S]-[ferredoxin] + 2 S-adenosyl-L-methionine = (sulfur carrier)-H + biotin + 2 5'-deoxyadenosine + 2 L-methionine + 2 oxidized [2Fe-2S]-[ferredoxin]. It participates in cofactor biosynthesis; biotin biosynthesis; biotin from 7,8-diaminononanoate: step 2/2. In terms of biological role, catalyzes the conversion of dethiobiotin (DTB) to biotin by the insertion of a sulfur atom into dethiobiotin via a radical-based mechanism. This is Biotin synthase from Chlorobium luteolum (strain DSM 273 / BCRC 81028 / 2530) (Pelodictyon luteolum).